The sequence spans 142 residues: Large ribosomal subunit protein uL11 (142 aa).

The protein belongs to the universal ribosomal protein uL11 family. As to quaternary structure, part of the ribosomal stalk of the 50S ribosomal subunit. Interacts with L10 and the large rRNA to form the base of the stalk. L10 forms an elongated spine to which L12 dimers bind in a sequential fashion forming a multimeric L10(L12)X complex. One or more lysine residues are methylated.

Forms part of the ribosomal stalk which helps the ribosome interact with GTP-bound translation factors. In Nitrobacter hamburgensis (strain DSM 10229 / NCIMB 13809 / X14), this protein is Large ribosomal subunit protein uL11.